A 277-amino-acid chain; its full sequence is Large ribosomal subunit protein uL2 (277 aa).

2 disordered regions span residues 36-58 and 219-277; these read PLHK…GGGH and TVRG…RKNK. Residues 258–277 are compositionally biased toward basic residues; it reads KTRKKKNKSDKFIVRRRKNK.

This sequence belongs to the universal ribosomal protein uL2 family. In terms of assembly, part of the 50S ribosomal subunit. Forms a bridge to the 30S subunit in the 70S ribosome.

One of the primary rRNA binding proteins. Required for association of the 30S and 50S subunits to form the 70S ribosome, for tRNA binding and peptide bond formation. It has been suggested to have peptidyltransferase activity; this is somewhat controversial. Makes several contacts with the 16S rRNA in the 70S ribosome. This Bacillus velezensis (strain DSM 23117 / BGSC 10A6 / LMG 26770 / FZB42) (Bacillus amyloliquefaciens subsp. plantarum) protein is Large ribosomal subunit protein uL2.